The following is a 139-amino-acid chain: Glutamate mutase sigma subunit (139 aa).

The region spanning 4–139 (KIKLVLGVIG…DLHADFPDHA (136 aa)) is the B12-binding domain. Adenosylcob(III)alamin contacts are provided by residues 14 to 18 (SDCHA), His-17, 62 to 64 (SSL), and 94 to 98 (NIVVG).

The protein belongs to the methylaspartate mutase GlmS subunit family. Heterotetramer composed of 2 epsilon subunits (GlmE) and 2 sigma subunits (GlmS). GlmE exists as a homodimer and GlmS as a monomer. Requires adenosylcob(III)alamin as cofactor.

The enzyme catalyses (2S,3S)-3-methyl-L-aspartate = L-glutamate. It functions in the pathway amino-acid degradation; L-glutamate degradation via mesaconate pathway; acetate and pyruvate from L-glutamate: step 1/4. In terms of biological role, catalyzes the carbon skeleton rearrangement of L-glutamate to L-threo-3-methylaspartate ((2S,3S)-3-methylaspartate). The sequence is that of Glutamate mutase sigma subunit from Treponema denticola (strain ATCC 35405 / DSM 14222 / CIP 103919 / JCM 8153 / KCTC 15104).